The chain runs to 257 residues: Dihydroorotate dehydrogenase B (NAD(+)), electron transfer subunit (257 aa).

The 99-residue stretch at 2-100 (ILIEDLTVVS…MGPQGNGFDI (99 aa)) folds into the FAD-binding FR-type domain. FAD contacts are provided by residues 51–54 (RPIS), 68–70 (VYR), and 75–76 (GT). [2Fe-2S] cluster contacts are provided by C220, C225, C228, and C244.

The protein belongs to the PyrK family. In terms of assembly, heterotetramer of 2 PyrK and 2 PyrD type B subunits. The cofactor is [2Fe-2S] cluster. Requires FAD as cofactor.

Its pathway is pyrimidine metabolism; UMP biosynthesis via de novo pathway; orotate from (S)-dihydroorotate (NAD(+) route): step 1/1. In terms of biological role, responsible for channeling the electrons from the oxidation of dihydroorotate from the FMN redox center in the PyrD type B subunit to the ultimate electron acceptor NAD(+). The polypeptide is Dihydroorotate dehydrogenase B (NAD(+)), electron transfer subunit (Streptococcus thermophilus (strain ATCC BAA-491 / LMD-9)).